The following is a 443-amino-acid chain: Putative F-box/FBD/LRR-repeat protein At5g22670 (443 aa).

Residues 10–56 enclose the F-box domain; it reads QDSISLLPDDLLCRILSNLPTKVAVRTSVLSKRWKRFSLSVPLLEFN. 5 LRR repeats span residues 139–165, 166–191, 219–243, 275–300, and 325–353; these read SLRLHNVSLPDFDHVSLPRLKTMHLID, NIYPNDALLENLISSCPVLEDLNVSR, YGDIEDDSWEVVIDAPRLSYLSLRD, NFLLTRSVVRNFFTRLSSVRDMTMSG, and YAVFCNSDLEKLPNFLESCPNLKSLVLEL. Positions 361-412 constitute an FBD domain; that stretch reads LLILSSSIPKCLRSSLEHVEIHTPISGAEAEMKLVKYFLENSAVLKKFTLQL.

In Arabidopsis thaliana (Mouse-ear cress), this protein is Putative F-box/FBD/LRR-repeat protein At5g22670.